The chain runs to 129 residues: Glycine cleavage system H protein (129 aa).

The region spanning 24 to 106 is the Lipoyl-binding domain; the sequence is SYTVGISEHA…FGDGWFFRVM (83 aa). Lys-65 is modified (N6-lipoyllysine).

It belongs to the GcvH family. As to quaternary structure, the glycine cleavage system is composed of four proteins: P, T, L and H. Requires (R)-lipoate as cofactor.

Its function is as follows. The glycine cleavage system catalyzes the degradation of glycine. The H protein shuttles the methylamine group of glycine from the P protein to the T protein. This is Glycine cleavage system H protein from Shewanella sediminis (strain HAW-EB3).